A 298-amino-acid polypeptide reads, in one-letter code: Small ribosomal subunit biogenesis GTPase RsgA (298 aa).

Residues 67–228 (TNELVRPPIS…IADTPGFSSL (162 aa)) enclose the CP-type G domain. Residues 116–119 (TKMD) and 171–179 (GQSGVGKSS) contribute to the GTP site. Zn(2+)-binding residues include cysteine 252, cysteine 257, histidine 259, and cysteine 265.

Belongs to the TRAFAC class YlqF/YawG GTPase family. RsgA subfamily. Monomer. Associates with 30S ribosomal subunit, binds 16S rRNA. Requires Zn(2+) as cofactor.

Its subcellular location is the cytoplasm. Functionally, one of several proteins that assist in the late maturation steps of the functional core of the 30S ribosomal subunit. Helps release RbfA from mature subunits. May play a role in the assembly of ribosomal proteins into the subunit. Circularly permuted GTPase that catalyzes slow GTP hydrolysis, GTPase activity is stimulated by the 30S ribosomal subunit. In Bacillus pumilus (strain SAFR-032), this protein is Small ribosomal subunit biogenesis GTPase RsgA.